The sequence spans 618 residues: Alpha-dioxygenase PIOX (618 aa).

Histidine 157 functions as the Proton acceptor in the catalytic mechanism. Aspartate 158 is a Ca(2+) binding site. Histidine 162 provides a ligand contact to heme b. Ca(2+) is bound by residues threonine 210, tryptophan 212, aspartate 214, and serine 216. Histidine 311 is a binding site for hexadecanoate. Residues histidine 382, arginine 479, and arginine 483 each contribute to the heme b site. Glutamate 599 contributes to the hexadecanoate binding site.

This sequence belongs to the peroxidase family. Requires heme b as cofactor. The cofactor is Ca(2+).

It carries out the reaction a 1,2-saturated fatty acid + O2 = a (2R)-2-hydroperoxy fatty acid. The enzyme catalyses (9Z,12Z)-octadecadienoate + O2 = (2R,9Z,12Z)-2-hydroperoxyoctadecadienoate. It catalyses the reaction hexadecanoate + O2 = (2R)-2-hydroperoxyhexadecanoate. The catalysed reaction is (9Z,12Z,15Z)-octadecatrienoate + O2 = (R)-2-hydroperoxy-(9Z,12Z,15Z)-octadecatrienoate. It carries out the reaction tetradecanoate + O2 = (2R)-2-hydroperoxytetradecanoate. The enzyme catalyses octadecanoate + O2 = (2R)-2-hydroperoxyoctadecanoate. It catalyses the reaction (9Z)-octadecenoate + O2 = (2R,9Z)-2-hydroperoxyoctadecenoate. Alpha-dioxygenase that catalyzes the primary oxygenation step of a variety of 14-20 carbon fatty acids, containing up to three unsaturated bonds, into their corresponding 2R-hydroperoxides. Involved in the production of oxylipins that function in cell signaling, wound healing, and protection from infection. The sequence is that of Alpha-dioxygenase PIOX from Oryza sativa subsp. japonica (Rice).